A 576-amino-acid polypeptide reads, in one-letter code: K(+)/H(+) antiporter NhaP2 (576 aa).

A run of 13 helical transmembrane segments spans residues 6–26 (INSFFLIGALLTAVSVLLSPM), 34–54 (ILLIFLAVGILAGEDGPGGIL), 58–78 (YSTAYLVSNLALAIILLDGGM), 87–107 (VALWPALSLATFGVAITTSIT), 109–129 (MMAAWLFDLHWLQGLLVGAIV), 163–183 (PMAVFLTVTLIAILANVDTEM), 185–205 (FSFMFISFIKQFGLGICLGLG), 219–239 (LADGLYSILVLSGGLIIYAAS), 242–262 (LGGSGILSIYLVGLFLGNKPT), 271–291 (VLDGMTWVSQIGMFLVLGLLL), 299–319 (ILIPGFALAFGMILFARPVAV), 335–355 (WFISWVGLRGAVPIILAVFPM), and 359–379 (LPGAQLYFNLAFFVVLVSLLV). The 82-residue stretch at 405–486 (SGVEIYPSSE…LEALSNLFSQ (82 aa)) folds into the RCK C-terminal domain.

The protein belongs to the monovalent cation:proton antiporter 1 (CPA1) transporter (TC 2.A.36) family. NhaP2 subfamily.

The protein localises to the cell inner membrane. The enzyme catalyses K(+)(in) + H(+)(out) = K(+)(out) + H(+)(in). In terms of biological role, k(+)/H(+) antiporter that extrudes potassium in exchange for external protons and maintains the internal concentration of potassium under toxic levels. This chain is K(+)/H(+) antiporter NhaP2, found in Shewanella baltica (strain OS223).